Here is a 410-residue protein sequence, read N- to C-terminus: Lissencephaly-1 homolog B (410 aa).

The LisH domain occupies 7 to 39 (QRDELNRAIADYLRSNGYEEAYSTFKKEAELDV). The stretch at 56 to 82 (TSVIRLQKKVMELESKLNEAKEEITLG) forms a coiled coil. WD repeat units lie at residues 106–147 (GHRS…RTLK), 148–187 (GHTD…CIRT), 190–229 (GHDH…CVKT), 232–271 (GHRE…CKAE), 274–333 (EHEH…CLMT), 336–377 (GHDN…KTLS), and 379–410 (HEHF…WECR).

The protein belongs to the WD repeat LIS1/nudF family. In terms of assembly, can self-associate. Component of the cytosolic PAF-AH (I) heterotetrameric enzyme, which is composed of PAFAH1B1 (beta), PAFAH1B2 (alpha2) and PAFAH1B3 (alpha1) subunits. The catalytic activity of the enzyme resides in the alpha1 (PAFAH1B3) and alpha2 (PAFAH1B2) subunits, whereas the beta subunit (PAFAH1B1) has regulatory activity. Trimer formation is not essential for the catalytic activity. Interacts with dynein, dynactin, nde1 and ndel1. As to expression, enriched in the photoreceptor cell layer.

The protein localises to the cytoplasm. The protein resides in the cytoskeleton. Its subcellular location is the microtubule organizing center. It localises to the centrosome. Its function is as follows. Regulatory subunit (beta subunit) of the cytosolic type I platelet-activating factor (PAF) acetylhydrolase (PAF-AH (I)), an enzyme that catalyzes the hydrolyze of the acetyl group at the sn-2 position of PAF and its analogs and participates in the PAF inactivation. Regulates the PAF-AH (I) activity in a catalytic dimer composition-dependent manner. Positively regulates the activity of the minus-end directed microtubule motor protein dynein. May enhance dynein-mediated microtubule sliding by targeting dynein to the microtubule plus end. Required for several dynein- and microtubule-dependent processes such as the maintenance of Golgi integrity, the peripheral transport of microtubule fragments and the coupling of the nucleus and centrosome. May be required for proliferation of neuronal precursors and neuronal migration. Involved in the positioning of nuclei in photoreceptor cells. This is Lissencephaly-1 homolog B (pafah1b1b) from Danio rerio (Zebrafish).